Here is a 266-residue protein sequence, read N- to C-terminus: Glioma pathogenesis-related protein 1 (266 aa).

The signal sequence occupies residues 1-21 (MRVTLATIAWMVSFVSNYSHT). One can recognise an SCP domain in the interval 38–175 (VRIHNKFRSE…SNGAHFICNY (138 aa)). A helical transmembrane segment spans residues 233 to 255 (YTSLFLIVNSVILILSVIITILV).

This sequence belongs to the CRISP family. As to expression, according to PubMed:8973356, it is ubiquitously expressed with high levels in lung and kidney and low levels in heart and liver. Highly expressed in cell lines derived from nervous system tumors arising from glia, low or absent in non-glial-derived nervous system tumor cell lines. Also found in fetal kidney. According to PubMed:7607567 it is expressed only in brain tumor glioblastoma multiforme/astrocytoma and not in other nervous system tumors or normal fetal or adult tissues.

Its subcellular location is the membrane. This chain is Glioma pathogenesis-related protein 1 (GLIPR1), found in Homo sapiens (Human).